A 96-amino-acid chain; its full sequence is uncharacterized protein (96 aa).

Helical transmembrane passes span 3 to 23, 30 to 50, and 68 to 88; these read KLTI…QLFA, TLGN…LASI, and IGLL…IIII.

The protein resides in the cell membrane. This is an uncharacterized protein from Bacillus subtilis (strain 168).